We begin with the raw amino-acid sequence, 1034 residues long: Vacuolar membrane protease (1034 aa).

The Cytoplasmic portion of the chain corresponds to 1–11 (MAVKNPFGFTT). The helical transmembrane segment at 12–32 (GPVTFWLIVVYAAFLIPLVWI) threads the bilayer. Residues 33-418 (HESVPAVPSS…GFAILELRGL (386 aa)) lie on the Vacuolar side of the membrane. Residues Asn51 and Asn141 are each glycosylated (N-linked (GlcNAc...) asparagine). Zn(2+) is bound by residues His200 and Asp212. Catalysis depends on Glu246, which acts as the Proton acceptor. Residues Glu247, Glu272, and His345 each contribute to the Zn(2+) site. Residues 419–439 (FAWTLTLLIVSPLVLALVTYI) traverse the membrane as a helical segment. The Cytoplasmic portion of the chain corresponds to 440-470 (LSRKDKYYFFSRKVTADEDDEPVSVGGWKGF). A helical membrane pass occupies residues 471–491 (FRFPFALVLSASITVLSAFLI). Residues 492 to 497 (RRVNPH) lie on the Vacuolar side of the membrane. The chain crosses the membrane as a helical span at residues 498–518 (IIYSSPYAVWAMTLSLFFLVF). The Cytoplasmic portion of the chain corresponds to 519-536 (WTIAKGASVVRPSALQRG). A helical membrane pass occupies residues 537–557 (YAHIWLFVISWVILVAVTAAA). Residues 558 to 567 (DRFKIASGYP) lie on the Vacuolar side of the membrane. A helical membrane pass occupies residues 568–588 (FAFFHSAVFVSALISLCDLFA). Over 589–703 (LPSKQEFARN…NLPSWTWFFQ (115 aa)) the chain is Cytoplasmic. A disordered region spans residues 623-653 (HSHVEDDVAEEPTETTPLRSGENGNGNNGTI). A helical membrane pass occupies residues 704–724 (LLLLAPITITVFLQIALFIVS). The Vacuolar portion of the chain corresponds to 725–736 (AIHSAAADGNDP). A helical transmembrane segment spans residues 737–757 (ILVYAAIAAFSIIILLPATPF). Over 758 to 762 (IHRAS) the chain is Cytoplasmic. Residues 763–783 (FYLPLFLLLVFFVTLIYNLVA) traverse the membrane as a helical segment. Over 784 to 1034 (FPFSAENRLK…LVEGRKKFRA (251 aa)) the chain is Vacuolar. Asn805, Asn866, and Asn879 each carry an N-linked (GlcNAc...) asparagine glycan.

It belongs to the peptidase M28 family. Zn(2+) is required as a cofactor.

It is found in the vacuole membrane. May be involved in vacuolar sorting and osmoregulation. The protein is Vacuolar membrane protease of Colletotrichum graminicola (strain M1.001 / M2 / FGSC 10212) (Maize anthracnose fungus).